The primary structure comprises 314 residues: MRGRVAGSCAPLGLLLVCLRLPGLFARSIGAVEEKVSQNLGTNLPQLGQPSLTGPPNSEHPQPALDLRSNDLARAPLKLSVPPSDGFPPAGGSAVQRWPLSGRLPAMYSWPPEDPWLMMAAAAADRLGEALPEELSYLSSAAALAPGSGPLPGESSPDATDLSPEASHLHQDSESRRLPRSNPLGPGGKILSQRPPWSLIYRVLPDHPWGTLNPSVSWGGGGPGTGWGTRPMPHPGGIWGINNQPPGTSWGNINRYPGGSWGNINRYPGGSWGNIHLYPGINNPFPPGVLRPPGSSWNTPAGFPNPPSPGLQWG.

An N-terminal signal peptide occupies residues 1 to 26 (MRGRVAGSCAPLGLLLVCLRLPGLFA). Residues 41 to 60 (GTNLPQLGQPSLTGPPNSEH) show a composition bias toward polar residues. Disordered stretches follow at residues 41–65 (GTNL…QPAL), 77–96 (LKLS…SAVQ), 147–191 (GSGP…GKIL), and 292–314 (PPGS…LQWG). The span at 147 to 157 (GSGPLPGESSP) shows a compositional bias: low complexity. Over residues 167–177 (SHLHQDSESRR) the composition is skewed to basic and acidic residues. The span at 303 to 314 (FPNPPSPGLQWG) shows a compositional bias: pro residues.

In terms of assembly, binds to numerous extracellular matrix proteins. Taste cell specific.

Its subcellular location is the secreted. The protein resides in the extracellular space. The protein localises to the extracellular matrix. This is an uncharacterized protein from Macaca mulatta (Rhesus macaque).